The following is a 286-amino-acid chain: ATP synthase gamma chain (286 aa).

The protein belongs to the ATPase gamma chain family. As to quaternary structure, F-type ATPases have 2 components, CF(1) - the catalytic core - and CF(0) - the membrane proton channel. CF(1) has five subunits: alpha(3), beta(3), gamma(1), delta(1), epsilon(1). CF(0) has three main subunits: a, b and c.

It is found in the cell inner membrane. Produces ATP from ADP in the presence of a proton gradient across the membrane. The gamma chain is believed to be important in regulating ATPase activity and the flow of protons through the CF(0) complex. This Shewanella sediminis (strain HAW-EB3) protein is ATP synthase gamma chain.